We begin with the raw amino-acid sequence, 201 residues long: Cobalt-precorrin-7 C(5)-methyltransferase (201 aa).

The protein belongs to the precorrin methyltransferase family.

It carries out the reaction Co-precorrin-7 + S-adenosyl-L-methionine = Co-precorrin-8X + S-adenosyl-L-homocysteine + H(+). Its pathway is cofactor biosynthesis; adenosylcobalamin biosynthesis; cob(II)yrinate a,c-diamide from sirohydrochlorin (anaerobic route): step 8/10. Its function is as follows. Catalyzes the methylation of C-5 in cobalt-precorrin-7 to form cobalt-precorrin-8. In Salmonella typhi, this protein is Cobalt-precorrin-7 C(5)-methyltransferase (cbiE).